A 5206-amino-acid chain; its full sequence is Multifunctional-autoprocessing repeats-in-toxin (5206 aa).

The signal sequence occupies residues 1 to 19 (MGKPFWRSVEYFFTGNYSA). RtxA repeat units lie at residues 101–118 (GAAG…GDVS), 121–138 (GAAA…GNVT), 141–157 (GAGG…QGNL), 161–184 (GAGA…GDVT), 187–204 (GAGA…GNIT), 207–224 (GAGA…GDIT), 255–272 (GVGG…GDIH), 275–291 (GGGA…GSSF), 584–601 (GAGG…GNVY), 604–620 (GGGI…FGNT), 624–641 (GGGA…GDLT), 644–658 (GAGL…SKQG), 741–753 (AGGA…VGDG), 759–771 (MLGG…HISG), 782–798 (ALGG…GNTL), 801–816 (MGGG…DGTT), 820–835 (MVGG…NGDT), 841–855 (GVGN…GQTL), 858–875 (MGAA…TSIA), 877–891 (MIGA…GEGN), 896–910 (MGGL…GNGD), 915–932 (MVAE…MSVA), 934–950 (MLAK…GTTL), 972–984 (MIGQ…KVGN), 991–1006 (MVGK…DGTS), 1031–1043 (GKAN…GDGL), 1067–1079 (AAAK…HVGD), 1087–1102 (AGKG…GTTV), 1110–1122 (GNVM…GTTI), 1125–1142 (AKGK…LGVN), 1145–1159 (WGQA…DGDR), 1163–1179 (AKGE…GKEV), 1184–1199 (GKAN…DDYT), 1201–1217 (AWGK…GRNV), 1220–1236 (AKGE…GDSF), 1242–1256 (KGNI…MQVT), 1258–1275 (AKGK…LSVT), 1296–1313 (AWGK…LNVA), and 1315–1332 (MKGK…LNIN). The span at 1606 to 1626 (SQQANAVSEHATQNQASQNAL) shows a compositional bias: polar residues. Disordered regions lie at residues 1606-1682 (SQQA…ESEA) and 1738-1895 (IAAA…EQEA). Residues 1627 to 1646 (SDKERAEADRQRLEQEKQKQ) show a composition bias toward basic and acidic residues. Positions 1652–1671 (GSQSQLESTDQQALGNNGQA) are enriched in polar residues. Residues 1778 to 1805 (AEAKADAETRKADAVAKSNDAKQAESDA) are compositionally biased toward basic and acidic residues. The span at 1825 to 1834 (NKANQAQNDA) shows a compositional bias: polar residues. Residues 1835–1849 (KGTKQNEGDRPDREG) are compositionally biased toward basic and acidic residues. Over residues 1870–1880 (SHITTDSQTNA) the composition is skewed to polar residues. The membrane localization region (MLD) stretch occupies residues 2377-2461 (ELMSVTELLD…SLLNQVNSRL (85 aa)). The tract at residues 2537-2901 (EYGQVVADTI…HQVTDVLDAL (365 aa)) is rho inactivation domain (RID). The ABH effector region stretch occupies residues 2998 to 3113 (VVLFLHGSGS…MPSMTKAITA (116 aa)). A Peptidase C80 domain is found at 4111-4295 (PTADGGESRF…AENNKVSLSW (185 aa)). Residues 4117–4119 (ESR), 4144–4145 (KH), and Arg-4175 contribute to the 1D-myo-inositol hexakisphosphate site. Residue His-4181 is the For cysteine protease activity of the active site. 1D-myo-inositol hexakisphosphate is bound at residue Ser-4226. Catalysis depends on Cys-4230, which acts as the Nucleophile; for cysteine protease activity. Residues 4259–4261 (SVR), 4272–4273 (RK), Lys-4285, and Lys-4290 contribute to the 1D-myo-inositol hexakisphosphate site. Disordered stretches follow at residues 4333–4362 (GAIG…ANNK) and 4738–4779 (LKEK…ETPD). Positions 4750–4762 (SSVSVNGASVNSA) are enriched in low complexity.

Mg(2+) is required as a cofactor.

It is found in the secreted. Its subcellular location is the host cytoplasm. The protein resides in the host cytosol. The protein localises to the host cell membrane. It catalyses the reaction L-lysyl-/S-(2E,6E,10E)-geranylgeranyl-L-cysteinyl-[protein] + hexadecanoyl-CoA = N(6)-hexadecanoyl-L-lysyl-/S-(2E,6E,10E)-geranylgeranyl-L-cysteinyl-[protein] + CoA + H(+). It carries out the reaction L-lysyl-/S-(2E,6E,10E)-geranylgeranyl-L-cysteinyl-[protein] + dodecanoyl-CoA = N(6)-dodecanoyl-L-lysyl-/S-(2E,6E,10E)-geranylgeranyl-L-cysteinyl-[protein] + CoA + H(+). The catalysed reaction is L-lysyl-/S-(2E,6E,10E)-geranylgeranyl-L-cysteinyl-[protein] + decanoyl-CoA = N(6)-decanoyl-L-lysyl-/S-(2E,6E,10E)-geranylgeranyl-L-cysteinyl-[protein] + CoA + H(+). Its function is as follows. Precursor of a multifunctional toxin that causes destruction of the actin cytoskeleton by covalent cross-linking of actin and inactivation of Rho GTPases when translocated into the host cytoplasm. Upon translocation into the host cell, undergoes autoprocessing in cis mediated by the peptidase C80 domain (also named CPD domain): the protease activity is activated upon binding inositol hexakisphosphate (InsP6) present at the host cell membrane and delivers the Cysteine protease domain-containing toxin F3 chain to the host cytosol. The Cysteine protease domain-containing toxin F3 chain will then further cleave and release effector toxin chains that cause disassembly of the actin cytoskeleton and enhance V.vulnificus colonization of the small intestine, possibly by facilitating evasion of phagocytic cells. Following autocatalytic cleavage in cis, this chain mediates processing in trans to release other individual toxin chains to the host cytosol. Released effector toxin chains cause disassembly of the actin cytoskeleton and enhance V.vulnificus colonization of the small intestine, possibly by facilitating evasion of phagocytic cells. Functionally, actin-directed toxin that catalyzes the covalent cross-linking of host cytoplasmic monomeric actin. Mediates the cross-link between 'Lys-50' of one monomer and 'Glu-270' of another actin monomer, resulting in formation of highly toxic actin oligomers that cause cell rounding. The toxin can be highly efficient at very low concentrations by acting on formin homology family proteins: toxic actin oligomers bind with high affinity to formins and adversely affect both nucleation and elongation abilities of formins, causing their potent inhibition in both profilin-dependent and independent manners. Acts as an acid--amino-acid ligase that transfers the gamma-phosphoryl group of ATP to the 'Glu-270' actin residue, resulting in the formation of an activated acyl phosphate intermediate. This intermediate is further hydrolyzed and the energy of hydrolysis is utilized for the formation of the amide bond between actin subunits. In terms of biological role, N-epsilon-fatty acyltransferase that mediates lysine-palmitoylation of host Rho GTPase proteins, with a strong preference for host Rac1. After delivery to the host cytosol, localizes to the host cell membrane where it palmitoylates host Rho GTPase proteins, resulting in loss of all active GTP-bound Rho and subsequent actin depolymerization. Prenylation of host Rac1 at the C-terminus is required for lysine-palmitoylation. Its function is as follows. Indirectly activates the small GTPase CDC42. The protein is Multifunctional-autoprocessing repeats-in-toxin of Vibrio vulnificus.